The following is a 318-amino-acid chain: Aspartate carbamoyltransferase catalytic subunit (318 aa).

Residues arginine 55 and threonine 56 each contribute to the carbamoyl phosphate site. Lysine 83 serves as a coordination point for L-aspartate. The carbamoyl phosphate site is built by arginine 105, histidine 138, and glutamine 141. Residues arginine 171 and arginine 225 each coordinate L-aspartate. Residues glycine 266 and proline 267 each coordinate carbamoyl phosphate.

Belongs to the aspartate/ornithine carbamoyltransferase superfamily. ATCase family. In terms of assembly, heterododecamer (2C3:3R2) of six catalytic PyrB chains organized as two trimers (C3), and six regulatory PyrI chains organized as three dimers (R2).

It carries out the reaction carbamoyl phosphate + L-aspartate = N-carbamoyl-L-aspartate + phosphate + H(+). It functions in the pathway pyrimidine metabolism; UMP biosynthesis via de novo pathway; (S)-dihydroorotate from bicarbonate: step 2/3. Catalyzes the condensation of carbamoyl phosphate and aspartate to form carbamoyl aspartate and inorganic phosphate, the committed step in the de novo pyrimidine nucleotide biosynthesis pathway. In Corynebacterium kroppenstedtii (strain DSM 44385 / JCM 11950 / CIP 105744 / CCUG 35717), this protein is Aspartate carbamoyltransferase catalytic subunit.